Reading from the N-terminus, the 602-residue chain is ATP-dependent DNA helicase XPD (602 aa).

The 247-residue stretch at 1–247 (MQKSYGVALE…DLIEMIRSAL (247 aa)) folds into the Helicase ATP-binding domain. 11–18 (SPTGSGKT) contributes to the ATP binding site. [4Fe-4S] cluster is bound by residues Cys74, Cys95, Cys110, and Cys146. Positions 193–196 (DEAH) match the DEAH box motif. The region spanning 421–602 (VIEDIILKVK…SAQAREKYGA (182 aa)) is the Helicase C-terminal domain. Residues Trp531 and Arg566 each contribute to the ssDNA site.

The protein belongs to the helicase family. RAD3/XPD subfamily. Monomer. Requires [4Fe-4S] cluster as cofactor.

The enzyme catalyses Couples ATP hydrolysis with the unwinding of duplex DNA at the replication fork by translocating in the 5'-3' direction. This creates two antiparallel DNA single strands (ssDNA). The leading ssDNA polymer is the template for DNA polymerase III holoenzyme which synthesizes a continuous strand.. It catalyses the reaction ATP + H2O = ADP + phosphate + H(+). Functionally, ATP-dependent 5'-3' DNA helicase. Thought to be involved in nucleotide excision repair (NER) of DNA. In Thermoplasma acidophilum (strain ATCC 25905 / DSM 1728 / JCM 9062 / NBRC 15155 / AMRC-C165), this protein is ATP-dependent DNA helicase XPD.